We begin with the raw amino-acid sequence, 115 residues long: Large ribosomal subunit protein bL19 (115 aa).

The protein belongs to the bacterial ribosomal protein bL19 family.

Functionally, this protein is located at the 30S-50S ribosomal subunit interface and may play a role in the structure and function of the aminoacyl-tRNA binding site. The polypeptide is Large ribosomal subunit protein bL19 (Lawsonia intracellularis (strain PHE/MN1-00)).